Consider the following 600-residue polypeptide: Dihydroxy-acid dehydratase (600 aa).

Mg(2+) is bound at residue D82. C123 provides a ligand contact to [2Fe-2S] cluster. Positions 124 and 125 each coordinate Mg(2+). Position 125 is an N6-carboxylysine (K125). C192 lines the [2Fe-2S] cluster pocket. A Mg(2+)-binding site is contributed by E489. Residue S515 is the Proton acceptor of the active site.

The protein belongs to the IlvD/Edd family. As to quaternary structure, homodimer. The cofactor is [2Fe-2S] cluster. Mg(2+) serves as cofactor.

The enzyme catalyses (2R)-2,3-dihydroxy-3-methylbutanoate = 3-methyl-2-oxobutanoate + H2O. It catalyses the reaction (2R,3R)-2,3-dihydroxy-3-methylpentanoate = (S)-3-methyl-2-oxopentanoate + H2O. It participates in amino-acid biosynthesis; L-isoleucine biosynthesis; L-isoleucine from 2-oxobutanoate: step 3/4. It functions in the pathway amino-acid biosynthesis; L-valine biosynthesis; L-valine from pyruvate: step 3/4. Functionally, functions in the biosynthesis of branched-chain amino acids. Catalyzes the dehydration of (2R,3R)-2,3-dihydroxy-3-methylpentanoate (2,3-dihydroxy-3-methylvalerate) into 2-oxo-3-methylpentanoate (2-oxo-3-methylvalerate) and of (2R)-2,3-dihydroxy-3-methylbutanoate (2,3-dihydroxyisovalerate) into 2-oxo-3-methylbutanoate (2-oxoisovalerate), the penultimate precursor to L-isoleucine and L-valine, respectively. The polypeptide is Dihydroxy-acid dehydratase (Bacteroides fragilis (strain YCH46)).